Consider the following 311-residue polypeptide: Ribosomal protein L11 methyltransferase (311 aa).

Residues T162, G183, D205, and N248 each coordinate S-adenosyl-L-methionine.

It belongs to the methyltransferase superfamily. PrmA family.

The protein localises to the cytoplasm. The catalysed reaction is L-lysyl-[protein] + 3 S-adenosyl-L-methionine = N(6),N(6),N(6)-trimethyl-L-lysyl-[protein] + 3 S-adenosyl-L-homocysteine + 3 H(+). Functionally, methylates ribosomal protein L11. In Bacillus pumilus (strain SAFR-032), this protein is Ribosomal protein L11 methyltransferase.